Reading from the N-terminus, the 246-residue chain is V-type proton ATPase subunit D 1 (246 aa).

Belongs to the V-ATPase D subunit family. In terms of assembly, V-ATPase is a heteromultimeric enzyme made up of two complexes: the ATP-hydrolytic V1 complex and the proton translocation V0 complex. The V1 complex consists of three catalytic AB heterodimers that form a heterohexamer, three peripheral stalks each consisting of EG heterodimers, one central rotor including subunits D and F, and the regulatory subunits C and H. The proton translocation complex V0 consists of the proton transport subunit a, a ring of proteolipid subunits c9c'', rotary subunit d, subunits e and f, and the accessory subunits VhaAC45 and ATP6AP2.

Subunit of the V1 complex of vacuolar(H+)-ATPase (V-ATPase), a multisubunit enzyme composed of a peripheral complex (V1) that hydrolyzes ATP and a membrane integral complex (V0) that translocates protons. V-ATPase is responsible for acidifying and maintaining the pH of intracellular compartments and in some cell types, is targeted to the plasma membrane, where it is responsible for acidifying the extracellular environment. The polypeptide is V-type proton ATPase subunit D 1 (Vha36-1) (Drosophila melanogaster (Fruit fly)).